A 179-amino-acid polypeptide reads, in one-letter code: Large ribosomal subunit protein uL6 (179 aa).

The protein belongs to the universal ribosomal protein uL6 family. Part of the 50S ribosomal subunit.

In terms of biological role, this protein binds to the 23S rRNA, and is important in its secondary structure. It is located near the subunit interface in the base of the L7/L12 stalk, and near the tRNA binding site of the peptidyltransferase center. The polypeptide is Large ribosomal subunit protein uL6 (Akkermansia muciniphila (strain ATCC BAA-835 / DSM 22959 / JCM 33894 / BCRC 81048 / CCUG 64013 / CIP 107961 / Muc)).